Reading from the N-terminus, the 227-residue chain is Ribonuclease HII (227 aa).

One can recognise an RNase H type-2 domain in the interval 16–205; the sequence is SLLAGVDEVG…VKMALDAVGV (190 aa). Residues Asp-22, Glu-23, and Asp-114 each coordinate a divalent metal cation.

It belongs to the RNase HII family. Requires Mn(2+) as cofactor. It depends on Mg(2+) as a cofactor.

The protein localises to the cytoplasm. The enzyme catalyses Endonucleolytic cleavage to 5'-phosphomonoester.. Its function is as follows. Endonuclease that specifically degrades the RNA of RNA-DNA hybrids. The protein is Ribonuclease HII of Marinobacter nauticus (strain ATCC 700491 / DSM 11845 / VT8) (Marinobacter aquaeolei).